We begin with the raw amino-acid sequence, 249 residues long: DNA polymerase sliding clamp (249 aa).

Belongs to the PCNA family. As to quaternary structure, homotrimer. The subunits circularize to form a toroid; DNA passes through its center. Replication factor C (RFC) is required to load the toroid on the DNA.

Functionally, sliding clamp subunit that acts as a moving platform for DNA processing. Responsible for tethering the catalytic subunit of DNA polymerase and other proteins to DNA during high-speed replication. The sequence is that of DNA polymerase sliding clamp from Thermococcus fumicolans.